The chain runs to 529 residues: Putative cysteine ligase BshC (529 aa).

Residues 450 to 485 (VKQTKGLENLEKRLLKAQKRNLSDQLQRVIDLQCEL) are a coiled coil.

The protein belongs to the BshC family.

This chain is Putative cysteine ligase BshC, found in Flavobacterium johnsoniae (strain ATCC 17061 / DSM 2064 / JCM 8514 / BCRC 14874 / CCUG 350202 / NBRC 14942 / NCIMB 11054 / UW101) (Cytophaga johnsonae).